Reading from the N-terminus, the 251-residue chain is Zwei Ig domain protein zig-3 (251 aa).

The signal sequence occupies residues 1-19 (MLLICISVLAAISAHPLSS). Ig-like C2-type domains lie at 42–144 (PSLK…AKIS) and 160–244 (PVIT…TFLY). 2 cysteine pairs are disulfide-bonded: C65–C128 and C181–C228.

In terms of tissue distribution, expressed in PVT, AIM and ASI neurons, in vulva and weakly in body wall muscles.

The protein resides in the secreted. Its function is as follows. Required for maintaining axon position of PVQ and PVP neurons postembryonically in the ventral nerve cord (VNC) by preventing axons drifting into the opposite side of the VNC that could occur during body growth and movement. In Caenorhabditis elegans, this protein is Zwei Ig domain protein zig-3.